The chain runs to 254 residues: Probable transcriptional regulatory protein Saro_0419 (254 aa).

The span at 1–14 shows a compositional bias: basic residues; that stretch reads MAGHSKFKNIMHRK. The tract at residues 1 to 22 is disordered; that stretch reads MAGHSKFKNIMHRKGAQDKKRS.

The protein belongs to the TACO1 family.

The protein localises to the cytoplasm. This is Probable transcriptional regulatory protein Saro_0419 from Novosphingobium aromaticivorans (strain ATCC 700278 / DSM 12444 / CCUG 56034 / CIP 105152 / NBRC 16084 / F199).